The primary structure comprises 134 residues: Ribonuclease P protein component (134 aa).

Belongs to the RnpA family. In terms of assembly, consists of a catalytic RNA component (M1 or rnpB) and a protein subunit.

It carries out the reaction Endonucleolytic cleavage of RNA, removing 5'-extranucleotides from tRNA precursor.. Functionally, RNaseP catalyzes the removal of the 5'-leader sequence from pre-tRNA to produce the mature 5'-terminus. It can also cleave other RNA substrates such as 4.5S RNA. The protein component plays an auxiliary but essential role in vivo by binding to the 5'-leader sequence and broadening the substrate specificity of the ribozyme. The protein is Ribonuclease P protein component of Ectopseudomonas mendocina (strain ymp) (Pseudomonas mendocina).